Here is a 262-residue protein sequence, read N- to C-terminus: MSHGGGGHAAELFPEDQVLAFGAVLSLVGIYIAHFFPSLAMLLGGLLAAGACVAGANTTRRVAAYGLGTGVPSIGMVSLGMGTISALAGVLIPSAFGLPVLVTPILAAVIAVVVGFIVGKLTQNPVGMKVPIIVSSMTKLSLMGALAILGFCTAFAGGFSADIIINGAINNGVIALAFIAAGMAILHPFNACIGPDESHKRTMTLAVACGFMAWLVFAIAKLDIVSTAVAAIFWFIAYGTFVKTSLADACEVKYVPELPKKE.

7 helical membrane-spanning segments follow: residues 27–47 (LVGI…GGLL), 72–92 (PSIG…GVLI), 98–118 (LPVL…GFIV), 145–165 (ALAI…DIII), 173–193 (VIAL…NACI), 200–220 (KRTM…FAIA), and 222–242 (LDIV…GTFV).

Belongs to the MtrC family. As to quaternary structure, the complex is composed of 8 subunits; MtrA, MtrB, MtrC, MtrD, MtrE, MtrF, MtrG and MtrH.

The protein resides in the cell membrane. The catalysed reaction is 5-methyl-5,6,7,8-tetrahydromethanopterin + coenzyme M + 2 Na(+)(in) = 5,6,7,8-tetrahydromethanopterin + methyl-coenzyme M + 2 Na(+)(out). Its pathway is one-carbon metabolism; methanogenesis from CO(2); methyl-coenzyme M from 5,10-methylene-5,6,7,8-tetrahydromethanopterin: step 2/2. Part of a complex that catalyzes the formation of methyl-coenzyme M and tetrahydromethanopterin from coenzyme M and methyl-tetrahydromethanopterin. This is an energy-conserving, sodium-ion translocating step. The sequence is that of Tetrahydromethanopterin S-methyltransferase subunit C from Methanococcus maripaludis (strain C5 / ATCC BAA-1333).